The chain runs to 59 residues: Small, acid-soluble spore protein H 1 (59 aa).

It belongs to the SspH family.

It is found in the spore core. This is Small, acid-soluble spore protein H 1 (sspH1) from Bacillus anthracis.